Reading from the N-terminus, the 314-residue chain is 4-hydroxy-3-methylbut-2-enyl diphosphate reductase (314 aa).

Cys-12 serves as a coordination point for [4Fe-4S] cluster. His-41 and His-74 together coordinate (2E)-4-hydroxy-3-methylbut-2-enyl diphosphate. Dimethylallyl diphosphate is bound by residues His-41 and His-74. His-41 and His-74 together coordinate isopentenyl diphosphate. Residue Cys-96 participates in [4Fe-4S] cluster binding. His-124 lines the (2E)-4-hydroxy-3-methylbut-2-enyl diphosphate pocket. His-124 contacts dimethylallyl diphosphate. His-124 is a binding site for isopentenyl diphosphate. Catalysis depends on Glu-126, which acts as the Proton donor. Thr-168 is a binding site for (2E)-4-hydroxy-3-methylbut-2-enyl diphosphate. A [4Fe-4S] cluster-binding site is contributed by Cys-198. (2E)-4-hydroxy-3-methylbut-2-enyl diphosphate contacts are provided by Ser-226, Ser-227, Asn-228, and Ser-270. Dimethylallyl diphosphate-binding residues include Ser-226, Ser-227, Asn-228, and Ser-270. Isopentenyl diphosphate-binding residues include Ser-226, Ser-227, Asn-228, and Ser-270.

The protein belongs to the IspH family. [4Fe-4S] cluster is required as a cofactor.

It catalyses the reaction isopentenyl diphosphate + 2 oxidized [2Fe-2S]-[ferredoxin] + H2O = (2E)-4-hydroxy-3-methylbut-2-enyl diphosphate + 2 reduced [2Fe-2S]-[ferredoxin] + 2 H(+). The catalysed reaction is dimethylallyl diphosphate + 2 oxidized [2Fe-2S]-[ferredoxin] + H2O = (2E)-4-hydroxy-3-methylbut-2-enyl diphosphate + 2 reduced [2Fe-2S]-[ferredoxin] + 2 H(+). The protein operates within isoprenoid biosynthesis; dimethylallyl diphosphate biosynthesis; dimethylallyl diphosphate from (2E)-4-hydroxy-3-methylbutenyl diphosphate: step 1/1. Its pathway is isoprenoid biosynthesis; isopentenyl diphosphate biosynthesis via DXP pathway; isopentenyl diphosphate from 1-deoxy-D-xylulose 5-phosphate: step 6/6. Catalyzes the conversion of 1-hydroxy-2-methyl-2-(E)-butenyl 4-diphosphate (HMBPP) into a mixture of isopentenyl diphosphate (IPP) and dimethylallyl diphosphate (DMAPP). Acts in the terminal step of the DOXP/MEP pathway for isoprenoid precursor biosynthesis. The protein is 4-hydroxy-3-methylbut-2-enyl diphosphate reductase of Pseudomonas fluorescens (strain Pf0-1).